The sequence spans 61 residues: [Thr6]-bradykinyl-Val,Asp (61 aa).

Residues Met-1–Cys-22 form the signal peptide. The propeptide occupies Glu-23–Glu-50. A disordered region spans residues Glu-24–Asp-61. Positions Lys-26–Arg-36 are enriched in acidic residues. The segment covering Glu-37 to Pro-52 has biased composition (basic and acidic residues). At Pro-53 the chain carries 4-hydroxyproline; in form [Hyp3,Thr6]-bradykinyl-Val,Asp and [Hyp3,Thr6]-bradykinin.

It belongs to the frog skin active peptide (FSAP) family. Bradykinin-related peptide subfamily. Expressed by the skin glands.

Its subcellular location is the secreted. Induces relaxation of rat smooth muscle from tail artery (EC(50)=16.8 nM) and contraction of that from ileum (EC(50)=205 nM), urinary bladder (EC(50)=895 nM) and uterus (EC(50)=60.3 nM). Binds to both bradykinin receptor B1 (BDKRB1) and B2 (BDKRB2). In terms of biological role, [Hyp3,Thr6]-bradykinin: Induces relaxation of rat smooth muscle from tail artery (EC(50)=56.7 nM) and contraction of that from ileum (EC(50)=588 nM), urinary bladder (EC(50)=4.6 uM) and uterus (EC(50)=3.9 nM). Binds to both bradykinin receptor B1 (BDKRB1) and B2 (BDKRB2). In arterial smooth muscle, the effect via BDKRB1 is stronger, in uterus, ileum and urinary bladder the effect via BDKRB2. Functionally, induces relaxation of rat smooth muscle from tail artery (EC(50)=10.8 nM) and contraction of that from ileum (EC(50)=645 nM), urinary bladder (EC(50)=1.1 uM) and uterus (EC(50)=1.2 uM). Binds to both bradykinin receptor B1 (BDKRB1) and B2 (BDKRB2). Apart from uterus smooth muscle, the effect via BDKRB2 is stronger. Its function is as follows. [Hyp3,Thr6]-bradykinyl-Val,Asp: Induces relaxation of rat smooth muscle from tail artery (EC(50)=3.5 nM) and contraction of that from ileum (EC(50)=223 nM), urinary bladder (EC(50)=1.5 uM) and uterus (EC(50)=356 nM). Binds to both bradykinin receptor B1 (BDKRB1) and B2 (BDKRB2); the effects via BDKRB2 are stronger. The sequence is that of [Thr6]-bradykinyl-Val,Asp from Agalychnis dacnicolor (Giant Mexican leaf frog).